We begin with the raw amino-acid sequence, 243 residues long: Voltage-gated monoatomic cation channel TMEM109 (243 aa).

The signal sequence occupies residues 1-33 (MAGSGSSAPWGKHLLHAVLMVLVALVLLHSALA). Over 34-83 (QSHRDFAPPGQQRREAPVDLLTQIGRSVRETLDTWIGPETMHLISETLSQ) the chain is Lumenal. A helical transmembrane segment spans residues 84 to 104 (VMWAISSAISVAFFALSGIAA). Topologically, residues 105-135 (QLLTALGLDGDHLTQGLKLSPSQVQTFLLWG) are cytoplasmic. A helical transmembrane segment spans residues 136 to 156 (AGALVVYWLLSLLLGLVLAVL). The Lumenal segment spans residues 157–185 (GRILGGLKLVIFLAGFVALVRSVPDPSTR). A helical membrane pass occupies residues 186–205 (ALLLLALLTLYALLSRLTGS). At 206–243 (RASGAQLEAKVRGLERQVDELRWRQRRAAKGARSVEEE) the chain is on the cytoplasmic side.

In terms of assembly, homooligomer. Interacts with CRYAB; in the cellular response to DNA damage. The N-terminus is blocked. As to expression, widely expressed. Expressed in skeletal, cardiac and smooth muscle cells, in brain, including neuroglial cells, cerebral cortex neurons and cerebellum, but not Purkinje cells. Also detected in Paneth and Goblet cells of the small intestine (but not in the epithelium), duodenal gland, pancreas, parotid gland, testis, thyroid gland and adrenal gland, as well as in epidermis, choroid plexus, ductus epididymidis, lymphocytes, fibroblasts, endothelial cells and seminiferous epithelial cells (at protein level). Not detected in mucous cells of the duodenal gland, in hepatocytes nor in uriniferous tubules.

The protein localises to the nucleus outer membrane. Its subcellular location is the endoplasmic reticulum membrane. It localises to the sarcoplasmic reticulum membrane. It carries out the reaction K(+)(in) = K(+)(out). The enzyme catalyses Ca(2+)(in) = Ca(2+)(out). In terms of biological role, functions as a voltage-gated monoatomic cation channel permeable to both potassium and calcium. Plays a role in the cellular response to DNA damage. The chain is Voltage-gated monoatomic cation channel TMEM109 from Oryctolagus cuniculus (Rabbit).